Consider the following 271-residue polypeptide: Mannosyl-3-phosphoglycerate phosphatase (271 aa).

Catalysis depends on Asp-13, which acts as the Nucleophile. Mg(2+) contacts are provided by Asp-13, Asp-15, and Asp-214.

It belongs to the HAD-like hydrolase superfamily. MPGP family. Mg(2+) is required as a cofactor.

The protein resides in the cytoplasm. The enzyme catalyses 2-O-(alpha-D-mannosyl)-3-phosphoglycerate + H2O = (2R)-2-O-(alpha-D-mannosyl)-glycerate + phosphate. The sequence is that of Mannosyl-3-phosphoglycerate phosphatase (yedP) from Escherichia coli O6:K15:H31 (strain 536 / UPEC).